Consider the following 560-residue polypeptide: Leucine-rich repeat and IQ domain-containing protein 4 (560 aa).

Residues 1 to 20 (MSKDIKSVEHSPKIHQRNDP) form a disordered region. LRR repeat units lie at residues 23–47 (VNDR…IFTF), 48–70 (TELE…IQRL), 72–95 (NIRV…LLSS), 97–116 (ESLD…VVSF), 117–140 (LHAL…IFKN), 141–164 (LHHL…IVNQ), 166–187 (KLRE…LCVL), 188–210 (YTLE…IGHL), 212–233 (GLQK…LCQC), 234–256 (SQLS…FAEL), 258–281 (KMTE…RWTS), 283–301 (HLLY…SFRC), 302–325 (LVNL…ICAL), 326–348 (KNLE…LGSL), 350–371 (KLKI…VLSL), 374–397 (LEKL…IRKL), 398–422 (QSLK…SMPN), 424–443 (EVLD…ICQA), 444–466 (QALK…LDSL), and 468–489 (NLKV…VCAE). The IQ domain maps to 504 to 533 (RNIMATKIQAWWRGTMVQRGFGKFGELLKP). Residues 529–560 (ELLKPQKKGKTSPKDKKGKKDVKGKPGKGKKK) form a disordered region. Residues 533–560 (PQKKGKTSPKDKKGKKDVKGKPGKGKKK) are compositionally biased toward basic residues.

This is Leucine-rich repeat and IQ domain-containing protein 4 (LRRIQ4) from Homo sapiens (Human).